Reading from the N-terminus, the 885-residue chain is Alanine--tRNA ligase (885 aa).

4 residues coordinate Zn(2+): His569, His573, Cys672, and His676.

This sequence belongs to the class-II aminoacyl-tRNA synthetase family. Zn(2+) serves as cofactor.

It localises to the cytoplasm. It carries out the reaction tRNA(Ala) + L-alanine + ATP = L-alanyl-tRNA(Ala) + AMP + diphosphate. In terms of biological role, catalyzes the attachment of alanine to tRNA(Ala) in a two-step reaction: alanine is first activated by ATP to form Ala-AMP and then transferred to the acceptor end of tRNA(Ala). Also edits incorrectly charged Ser-tRNA(Ala) and Gly-tRNA(Ala) via its editing domain. The polypeptide is Alanine--tRNA ligase (Chlorobaculum tepidum (strain ATCC 49652 / DSM 12025 / NBRC 103806 / TLS) (Chlorobium tepidum)).